The primary structure comprises 337 residues: MRDPVTDFEYPAAWVAACRSPDLLDDVRRGLAVLTASGTVLRRGFSTGTTAAAACKAAILSLACDTVREVDVTLPCGIAVRLAVDGYRGQASCRKDAGDYTADVTGGLEFVAMAAPSLSGGVQFVPGEGIGSFARDTPRHRRGTPAISAPALDCIRRSIDEAVEEADLSGTTVILTIPRGAEVAQKTLNPRVGVHGGISVLGTTGFVEPWDDHMTEGVIDRIARAPGAVVLTTGRLGLRYSRLLFPEHEAILVGNKLEEALRAVEGDAVICGLPGLILKFMNPDVLSGTGCVTVEELSATPLWEETVRRELAAFRARYPRVRVVIVDRDGRIIGEPP.

The protein belongs to the CbiD family.

The catalysed reaction is Co-precorrin-5B + S-adenosyl-L-methionine = Co-precorrin-6A + S-adenosyl-L-homocysteine. It functions in the pathway cofactor biosynthesis; adenosylcobalamin biosynthesis; cob(II)yrinate a,c-diamide from sirohydrochlorin (anaerobic route): step 6/10. In terms of biological role, catalyzes the methylation of C-1 in cobalt-precorrin-5B to form cobalt-precorrin-6A. The polypeptide is Cobalt-precorrin-5B C(1)-methyltransferase (Methanoculleus marisnigri (strain ATCC 35101 / DSM 1498 / JR1)).